Consider the following 139-residue polypeptide: Putative pre-16S rRNA nuclease (139 aa).

This sequence belongs to the YqgF nuclease family.

The protein resides in the cytoplasm. Its function is as follows. Could be a nuclease involved in processing of the 5'-end of pre-16S rRNA. The protein is Putative pre-16S rRNA nuclease of Streptococcus pyogenes serotype M3 (strain ATCC BAA-595 / MGAS315).